The following is a 230-amino-acid chain: L-aspartate/glutamate-specific racemase (230 aa).

Residues Met-10, Gln-52, and 83 to 85 (TNT) each bind substrate. Thr-83 serves as the catalytic Proton donor. Residue Cys-197 is the Proton acceptor of the active site. Residue 198 to 199 (TE) participates in substrate binding.

The protein belongs to the aspartate/glutamate racemases family. As to quaternary structure, homodimer.

The catalysed reaction is L-glutamate = D-glutamate. It carries out the reaction L-aspartate = D-aspartate. Exhibits racemase activity for both L-glutamate and L-aspartate. The chain is L-aspartate/glutamate-specific racemase from Escherichia coli O157:H7.